Here is a 116-residue protein sequence, read N- to C-terminus: Large ribosomal subunit protein bL17 (116 aa).

It belongs to the bacterial ribosomal protein bL17 family. In terms of assembly, part of the 50S ribosomal subunit. Contacts protein L32.

This Cyanothece sp. (strain PCC 7425 / ATCC 29141) protein is Large ribosomal subunit protein bL17.